A 423-amino-acid chain; its full sequence is Serine/threonine-protein kinase ppk25 (423 aa).

Residues Ser36 and Ser38 each carry the phosphoserine modification. The Protein kinase domain maps to 53 to 305 (WIIKKTIGAG…LEQAAKFPWL (253 aa)). Residues 59 to 67 (IGAGSMGKV) and Lys82 each bind ATP. Residue Asp175 is the Proton acceptor of the active site.

Belongs to the protein kinase superfamily. Ser/Thr protein kinase family.

The protein localises to the cytoplasm. The enzyme catalyses L-seryl-[protein] + ATP = O-phospho-L-seryl-[protein] + ADP + H(+). It catalyses the reaction L-threonyl-[protein] + ATP = O-phospho-L-threonyl-[protein] + ADP + H(+). This Schizosaccharomyces pombe (strain 972 / ATCC 24843) (Fission yeast) protein is Serine/threonine-protein kinase ppk25 (ppk25).